A 389-amino-acid chain; its full sequence is Chalcone synthase 1 (389 aa).

The active site involves cysteine 164.

It belongs to the thiolase-like superfamily. Chalcone/stilbene synthases family.

It carries out the reaction (E)-4-coumaroyl-CoA + 3 malonyl-CoA + 3 H(+) = 2',4,4',6'-tetrahydroxychalcone + 3 CO2 + 4 CoA. It participates in secondary metabolite biosynthesis; flavonoid biosynthesis. Functionally, the primary product of this enzyme is 4,2',4',6'-tetrahydroxychalcone (also termed naringenin-chalcone or chalcone) which can under specific conditions spontaneously isomerize into naringenin. The sequence is that of Chalcone synthase 1 (CHS1) from Medicago sativa (Alfalfa).